Consider the following 295-residue polypeptide: UDP-N-acetylenolpyruvoylglucosamine reductase (295 aa).

Positions 26–189 (VGGQADILFK…IEAEFKGVSS (164 aa)) constitute an FAD-binding PCMH-type domain. Arginine 169 is an active-site residue. Cysteine 218 functions as the Proton donor in the catalytic mechanism. Glutamate 288 is a catalytic residue.

Belongs to the MurB family. Requires FAD as cofactor.

The protein localises to the cytoplasm. It catalyses the reaction UDP-N-acetyl-alpha-D-muramate + NADP(+) = UDP-N-acetyl-3-O-(1-carboxyvinyl)-alpha-D-glucosamine + NADPH + H(+). The protein operates within cell wall biogenesis; peptidoglycan biosynthesis. Cell wall formation. The chain is UDP-N-acetylenolpyruvoylglucosamine reductase from Wolbachia sp. subsp. Brugia malayi (strain TRS).